Here is a 206-residue protein sequence, read N- to C-terminus: MSKGSTTKKWIQDHTSDYYVLQANKLGYRSRASFKIIEIQDKYNLFKQNMFIIDLGAAPGGWSEQVVKFIGNNGKLIALDLLEMAPIAGVEFIQGNFSSDETYERLNQLINDKKIDCVISDMAPNLSGNKTSDQARSIHLLELALDFATTNLNRNGSFVAKVFQGQGSDEYLKLVRESFNKVTQFKPKSSRPKSREFYVVATGFKG.

S-adenosyl-L-methionine-binding residues include Gly-60, Trp-62, Asp-80, Asn-96, and Asp-121. Residue Lys-161 is the Proton acceptor of the active site.

Belongs to the class I-like SAM-binding methyltransferase superfamily. RNA methyltransferase RlmE family.

The protein resides in the cytoplasm. It carries out the reaction uridine(2552) in 23S rRNA + S-adenosyl-L-methionine = 2'-O-methyluridine(2552) in 23S rRNA + S-adenosyl-L-homocysteine + H(+). Specifically methylates the uridine in position 2552 of 23S rRNA at the 2'-O position of the ribose in the fully assembled 50S ribosomal subunit. The protein is Ribosomal RNA large subunit methyltransferase E of Francisella philomiragia subsp. philomiragia (strain ATCC 25017 / CCUG 19701 / FSC 153 / O#319-036).